A 229-amino-acid chain; its full sequence is Octanoyltransferase (229 aa).

Residues 30 to 223 (PDTPDTIWLV…QLQQRAQAHP (194 aa)) form the BPL/LPL catalytic domain. Residues 69 to 76 (RGGQITYH), 141 to 143 (ALG), and 154 to 156 (GVS) contribute to the substrate site. Cys-172 acts as the Acyl-thioester intermediate in catalysis.

This sequence belongs to the LipB family.

It localises to the cytoplasm. It catalyses the reaction octanoyl-[ACP] + L-lysyl-[protein] = N(6)-octanoyl-L-lysyl-[protein] + holo-[ACP] + H(+). It functions in the pathway protein modification; protein lipoylation via endogenous pathway; protein N(6)-(lipoyl)lysine from octanoyl-[acyl-carrier-protein]: step 1/2. Its function is as follows. Catalyzes the transfer of endogenously produced octanoic acid from octanoyl-acyl-carrier-protein onto the lipoyl domains of lipoate-dependent enzymes. Lipoyl-ACP can also act as a substrate although octanoyl-ACP is likely to be the physiological substrate. The chain is Octanoyltransferase from Ralstonia pickettii (strain 12J).